Consider the following 419-residue polypeptide: UDP-N-acetylglucosamine 1-carboxyvinyltransferase (419 aa).

A phosphoenolpyruvate-binding site is contributed by 22-23 (KN). Residue Arg-93 participates in UDP-N-acetyl-alpha-D-glucosamine binding. Cys-117 functions as the Proton donor in the catalytic mechanism. Residue Cys-117 is modified to 2-(S-cysteinyl)pyruvic acid O-phosphothioketal. UDP-N-acetyl-alpha-D-glucosamine contacts are provided by Asp-307 and Ile-329.

It belongs to the EPSP synthase family. MurA subfamily.

It localises to the cytoplasm. The catalysed reaction is phosphoenolpyruvate + UDP-N-acetyl-alpha-D-glucosamine = UDP-N-acetyl-3-O-(1-carboxyvinyl)-alpha-D-glucosamine + phosphate. It functions in the pathway cell wall biogenesis; peptidoglycan biosynthesis. Functionally, cell wall formation. Adds enolpyruvyl to UDP-N-acetylglucosamine. The protein is UDP-N-acetylglucosamine 1-carboxyvinyltransferase of Shewanella woodyi (strain ATCC 51908 / MS32).